The following is a 272-amino-acid chain: Glycosylphosphatidylinositol anchor biosynthesis protein 11 (272 aa).

Over residues 21–31 (QSTSTTKSTPG) the composition is skewed to polar residues. A disordered region spans residues 21 to 48 (QSTSTTKSTPGSQATESSTTTAGSSSSL). Residues 32–48 (SQATESSTTTAGSSSSL) are compositionally biased toward low complexity. 5 consecutive transmembrane segments (helical) span residues 91 to 111 (VMLN…LLCL), 145 to 165 (LLAS…MVLF), 177 to 197 (FLCA…VHGV), 215 to 235 (TFGG…PIPL), and 248 to 268 (ILCG…TLFW).

It belongs to the PIGF family.

It is found in the endoplasmic reticulum membrane. The protein operates within glycolipid biosynthesis; glycosylphosphatidylinositol-anchor biosynthesis. Acts in the GPI biosynthetic pathway between GlcNAc-PI synthesis and GPI transfer to protein. This Neurospora crassa (strain ATCC 24698 / 74-OR23-1A / CBS 708.71 / DSM 1257 / FGSC 987) protein is Glycosylphosphatidylinositol anchor biosynthesis protein 11 (gpi-11).